Here is a 423-residue protein sequence, read N- to C-terminus: Major capsid protein (423 aa).

The interval 47–67 is disordered; the sequence is SVSFKRPHQFKSERTETGDIT. Over residues 56–67 the composition is skewed to basic and acidic residues; that stretch reads FKSERTETGDIT.

It belongs to the P22 phage major capsid protein family.

Its subcellular location is the virion. Functionally, assembles to form an icosahedral capsid. This is Major capsid protein (24) from Escherichia coli (Bacteriophage APSE-1).